The primary structure comprises 66 residues: Pteroicidin-alpha (66 aa).

An N-terminal signal peptide occupies residues M1–A22. R43 carries the arginine amide; partial modification. The propeptide occupies G44–A66.

The protein belongs to the pleurocidin family. This peptide exists in N-terminally amidated and non-amidated forms. The amidated form is more active and has a greater alpha-helix content than the non-amidated form. As to expression, expressed in gill, skin, intestine, spleen, anterior kidney, and blood cells.

It is found in the secreted. The amidated peptide is bactericidal on human pathogens like S.aureus or E.coli, as well as on the fish pathogen A.salmonicida. May also be active against a variety of fungi. It can kill bacteria in less than 30 minutes (S.aureus) and 120 minutes (V.vulnificus). It induces hemolysis of erythrocytes from human and fishes (sea bass and lesser-spotted dogfish). Its function is as follows. The non-amidated peptide only inhibits growth of human pathogens like S.aureus or E.coli, and the fish pathogen A.salmonicida. Induces hemolysis of erythrocytes from human and fishes (sea bass and lesser-spotted dogfish). This chain is Pteroicidin-alpha, found in Pterois volitans (Red lionfish).